The primary structure comprises 249 residues: tRNA pseudouridine synthase A (249 aa).

Catalysis depends on Asp-52, which acts as the Nucleophile. Tyr-111 serves as a coordination point for substrate.

The protein belongs to the tRNA pseudouridine synthase TruA family. As to quaternary structure, homodimer.

It carries out the reaction uridine(38/39/40) in tRNA = pseudouridine(38/39/40) in tRNA. Functionally, formation of pseudouridine at positions 38, 39 and 40 in the anticodon stem and loop of transfer RNAs. The chain is tRNA pseudouridine synthase A from Brachyspira hyodysenteriae (strain ATCC 49526 / WA1).